Here is a 130-residue protein sequence, read N- to C-terminus: Ribosome-binding factor A (130 aa).

It belongs to the RbfA family. Monomer. Binds 30S ribosomal subunits, but not 50S ribosomal subunits or 70S ribosomes.

It localises to the cytoplasm. Functionally, one of several proteins that assist in the late maturation steps of the functional core of the 30S ribosomal subunit. Associates with free 30S ribosomal subunits (but not with 30S subunits that are part of 70S ribosomes or polysomes). Required for efficient processing of 16S rRNA. May interact with the 5'-terminal helix region of 16S rRNA. This is Ribosome-binding factor A from Flavobacterium psychrophilum (strain ATCC 49511 / DSM 21280 / CIP 103535 / JIP02/86).